Reading from the N-terminus, the 551-residue chain is Hyaluronan synthase 2 (551 aa).

Residues 1–11 (MHCERFICILR) are Cytoplasmic-facing. A helical membrane pass occupies residues 12–32 (IIGTTLFGVSLLLGISAAYIV). The Extracellular portion of the chain corresponds to 33–45 (GYQFIQTDNYYFS). Residues 46-66 (FGLYGAILALHLIIQSLFAFL) traverse the membrane as a helical segment. The Cytoplasmic segment spans residues 67 to 374 (EHRKMKRSLE…NSLWFHKHHL (308 aa)). The helical transmembrane segment at 375–395 (WMTYEAVITGFFPFFLIATVI) threads the bilayer. Residues 396-402 (QLFYRGR) are Extracellular-facing. The chain crosses the membrane as a helical span at residues 403–423 (IWNILLFLLTVQLVGLIKSSF). At 424 to 429 (ASALRG) the chain is on the cytoplasmic side. The chain crosses the membrane as a helical span at residues 430 to 450 (NIVMVFMSFYSVLYMSSLLPA). Residues 451 to 470 (KMFAIATINKAGWGTSGRKT) lie on the Extracellular side of the membrane. The helical transmembrane segment at 471 to 491 (IVVNFIGLIPITVWFTILLGG) threads the bilayer. The Cytoplasmic portion of the chain corresponds to 492-509 (VCYTIWRETKKPFSESEK). Residues 510–530 (IVLAVGAILYACYWVMLLTMY) traverse the membrane as a helical segment. At 531 to 551 (VSLVMKCGRRRKEPQHDLVLA) the chain is on the extracellular side.

This sequence belongs to the NodC/HAS family. Homodimer; dimerization promotes enzymatic activity. The cofactor is Mg(2+).

Its subcellular location is the cell membrane. It is found in the endoplasmic reticulum membrane. The protein localises to the vesicle. The protein resides in the golgi apparatus membrane. It localises to the lysosome. The enzyme catalyses [hyaluronan](n) + UDP-N-acetyl-alpha-D-glucosamine = N-acetyl-beta-D-glucosaminyl-(1-&gt;4)-[hyaluronan](n) + UDP + H(+). The catalysed reaction is N-acetyl-beta-D-glucosaminyl-(1-&gt;4)-[hyaluronan](n) + UDP-alpha-D-glucuronate = [hyaluronan](n+1) + UDP + H(+). Its pathway is glycan biosynthesis; hyaluronan biosynthesis. Its function is as follows. Catalyzes the addition of GlcNAc or GlcUA monosaccharides to the nascent hyaluronan polymer. Therefore, it is essential to hyaluronan synthesis a major component of most extracellular matrices that has a structural role in tissues architectures and regulates cell adhesion, migration and differentiation. This is one of three isoenzymes responsible for cellular hyaluronan synthesis and it is particularly responsible for the synthesis of high molecular mass hyaluronan. The protein is Hyaluronan synthase 2 (has2) of Xenopus laevis (African clawed frog).